The chain runs to 83 residues: Small ribosomal subunit protein eS21 (83 aa).

Belongs to the eukaryotic ribosomal protein eS21 family. In terms of assembly, component of the 40S small ribosomal subunit.

It is found in the cytoplasm. The protein resides in the cytosol. It localises to the rough endoplasmic reticulum. This chain is Small ribosomal subunit protein eS21 (RpS21), found in Spodoptera frugiperda (Fall armyworm).